A 151-amino-acid chain; its full sequence is Probable cGMP 3',5'-cyclic phosphodiesterase subunit delta (151 aa).

This sequence belongs to the PDE6D/unc-119 family. In terms of assembly, interacts with Pde6.

The protein localises to the nucleus. Its subcellular location is the cytoplasm. The polypeptide is Probable cGMP 3',5'-cyclic phosphodiesterase subunit delta (Anopheles gambiae (African malaria mosquito)).